A 115-amino-acid polypeptide reads, in one-letter code: UPF0145 protein lp_2083 (115 aa).

The protein belongs to the UPF0145 family.

This Lactiplantibacillus plantarum (strain ATCC BAA-793 / NCIMB 8826 / WCFS1) (Lactobacillus plantarum) protein is UPF0145 protein lp_2083.